The sequence spans 352 residues: 3-isopropylmalate dehydrogenase (352 aa).

71 to 87 (GAHDSAWNQLPRHLRPE) contributes to the NAD(+) binding site. Positions 94, 104, 132, and 218 each coordinate substrate. Positions 218, 242, and 246 each coordinate Mg(2+). 275 to 287 (GSAPDIAGQGVAN) is a binding site for NAD(+).

Belongs to the isocitrate and isopropylmalate dehydrogenases family. LeuB type 1 subfamily. As to quaternary structure, homodimer. It depends on Mg(2+) as a cofactor. Mn(2+) is required as a cofactor.

The protein resides in the cytoplasm. The enzyme catalyses (2R,3S)-3-isopropylmalate + NAD(+) = 4-methyl-2-oxopentanoate + CO2 + NADH. It functions in the pathway amino-acid biosynthesis; L-leucine biosynthesis; L-leucine from 3-methyl-2-oxobutanoate: step 3/4. Catalyzes the oxidation of 3-carboxy-2-hydroxy-4-methylpentanoate (3-isopropylmalate) to 3-carboxy-4-methyl-2-oxopentanoate. The product decarboxylates to 4-methyl-2 oxopentanoate. The polypeptide is 3-isopropylmalate dehydrogenase (Deinococcus radiodurans (strain ATCC 13939 / DSM 20539 / JCM 16871 / CCUG 27074 / LMG 4051 / NBRC 15346 / NCIMB 9279 / VKM B-1422 / R1)).